A 180-amino-acid chain; its full sequence is Cytidylate kinase (180 aa).

An ATP-binding site is contributed by 7–15 (GPPGSGTTT).

Belongs to the cytidylate kinase family. Type 2 subfamily.

The protein resides in the cytoplasm. It catalyses the reaction CMP + ATP = CDP + ADP. It carries out the reaction dCMP + ATP = dCDP + ADP. The sequence is that of Cytidylate kinase (cmk) from Archaeoglobus fulgidus (strain ATCC 49558 / DSM 4304 / JCM 9628 / NBRC 100126 / VC-16).